We begin with the raw amino-acid sequence, 239 residues long: Derlin-2 (239 aa).

At 1 to 57 (MAYQSLRLEYLQIPPVSRAYTTACVLTTAAVQLELITPFQLYFNPELIFKHFQIWRL) the chain is on the cytoplasmic side. Residues 58 to 78 (ITNFLFFGPVGFNFLFNMIFL) traverse the membrane as a helical segment. At 79–96 (YRYCRMLEEGSFRGRTAD) the chain is on the lumenal side. Residues 97 to 117 (FVFMFLFGGFLMTLFGLFVSL) traverse the membrane as a helical segment. The Cytoplasmic portion of the chain corresponds to 118–150 (VFLGQAFTIMLVYVWSRRNPYVRMNFFGLLNFQ). A helical transmembrane segment spans residues 151 to 171 (APFLPWVLMGFSLLLGNSIIV). Residue aspartate 172 is a topological domain, lumenal. A helical transmembrane segment spans residues 173–193 (LLGIAVGHIYFFLEDIFPNQP). At 194-239 (GGIRILKTPSILRTIFDTPDEDPNYNPLPEERPGGFAWGEGQRLGG) the chain is on the cytoplasmic side. The tract at residues 214–239 (EDPNYNPLPEERPGGFAWGEGQRLGG) is disordered. Over residues 229–239 (FAWGEGQRLGG) the composition is skewed to gly residues.

Belongs to the derlin family. Forms homo- and heterooligomers with DERL3 and, to a lesser extent, with DERL1. Interacts with the SEL1L/SYVN1 and VCP/SELENOS protein complexes. Mediates association between VCP and EDEM1, as well as that between VCP and the misfolded glycoproteins. Interacts with OS9. Interacts with SELENOK and SELENOS. Interacts with the signal recognition particle/SRP and the SRP receptor; in the process of endoplasmic reticulum stress-induced pre-emptive quality control. Interacts with CCDC47. In terms of tissue distribution, widely expressed, with lowest levels in brain and heart.

Its subcellular location is the endoplasmic reticulum membrane. Its function is as follows. Functional component of endoplasmic reticulum-associated degradation (ERAD) for misfolded lumenal glycoproteins, but not that of misfolded nonglycoproteins. May act by forming a channel that allows the retrotranslocation of misfolded glycoproteins into the cytosol where they are ubiquitinated and degraded by the proteasome. May mediate the interaction between VCP and misfolded glycoproteins. May also be involved in endoplasmic reticulum stress-induced pre-emptive quality control, a mechanism that selectively attenuates the translocation of newly synthesized proteins into the endoplasmic reticulum and reroutes them to the cytosol for proteasomal degradation. The chain is Derlin-2 from Mus musculus (Mouse).